Reading from the N-terminus, the 2327-residue chain is Kielin/chordin-like protein (2327 aa).

The N-terminal stretch at 1–19 (MNTLLWTILLPLLFSFCVC) is a signal peptide. The tract at residues 250–294 (LPLPYSLSGERQMEDEEIQREPRAPDLSDTDHYQQQQSEVPAQLL) is disordered. A compositionally biased stretch (basic and acidic residues) spans 268–281 (QREPRAPDLSDTDH). Positions 291 to 332 (AQLLAKDDRLQRLEEAVKGLTNMIDMIKSQNADLQARVIALE) form a coiled coil. VWFC domains lie at 339–400 (STCV…SVGP), 401–438 (CMSC…PLCA), 439–493 (TGCS…AKCQ), 494–553 (QGCE…PSCP), 554–610 (VCEL…LDCS), 611–669 (ACEM…SQCQ), 670–728 (SCMD…PMCD), 729–786 (GCLY…PRCE), 787–847 (GCEY…PSCD), 848–907 (VCDF…PVCK), 908–966 (VCVQ…PVCD), 967–1025 (SCSY…AKCP), 1026–1083 (DCRY…NNCN), 1084–1142 (GCNY…PQCP), 1146–1203 (ADCP…RSCD), 1204–1260 (GCLM…KECQ), 1261–1319 (DCQY…PVCD), 1321–1377 (CSYN…CPIC), 1378–1439 (QGCH…DGCN), 1440–1495 (YSGR…PRCT), 1496–1555 (GICK…PVCD), 1556–1614 (RCFY…RECP), 1615–1673 (VCRY…PRCR), 1674–1731 (GCVY…PVCA), 1732–1799 (DCIS…SSCA), 1800–1860 (QALS…PVCN), 1861–1924 (ECVV…HECQ), and 1928–1988 (VSCW…PHCI). The region spanning 1992 to 2168 (ATCIAFGDPH…SSNDSSSSCW (177 aa)) is the VWFD domain. 2 cysteine pairs are disulfide-bonded: cysteine 1994-cysteine 2126 and cysteine 2016-cysteine 2167. The TIL domain occupies 2259 to 2319 (CPHDRGYVFD…ESHCIPPESC (61 aa)).

The protein resides in the secreted. Its function is as follows. May be a signaling molecule that mediates inductive activities of the embryonic midline. Able to dorsalize mesoderm. The sequence is that of Kielin/chordin-like protein (kcp) from Xenopus laevis (African clawed frog).